Reading from the N-terminus, the 460-residue chain is MLHLAGTLQITHGLRDLALKHGPLMHLQLGEISAVVVSSARVAKEVLKTHDIAFADRPKLVSTKILLRNEKDLVMSIYGDYWRQMRKLCTVELLNTNKVSFFRSIREEEVWRLVQSIQSSLESPINLSKRFSAFTNAVTCIATIGKRSQLQDELVQVIEDIASLAGGFDVSDLFPSIKLLHVLSGMRPKLQTIRKKLDNIFDNIILEHKENRNRTNKGYGLTGEEDLVDVLLSVQERGGFEFPVTTDDIYGLILNMLIGGTDTSATALEWTMSELIRNPRVLEKVQAEVRQALKGKTTIHENDIQGLSYLKLVIKETLRLHPPLALLLPRLCRDERQIDGYQIPIDTKLIINAWAIGRDPGYWVDAESFEPERFDNISADFNGVNLNYIPFGSGRRMCPGISFGVATVELPLALLLYHFNWKLPFGMKPESLDMSETFGATLKRKNNLCLIATSCIPSNN.

Cysteine 398 serves as a coordination point for heme.

Belongs to the cytochrome P450 family. Heme serves as cofactor.

Functionally, probable heme-thiolate monooxygenase. The chain is Cytochrome P450 CYP71D312 from Panax ginseng (Korean ginseng).